Reading from the N-terminus, the 147-residue chain is uncharacterized protein (147 aa).

Positions 30 to 102 (GRCEQVALSS…TPPTRPESIF (73 aa)) are disordered. A compositionally biased stretch (polar residues) spans 62–71 (RPSTGETFVQ).

This is an uncharacterized protein from Homo sapiens (Human).